The sequence spans 321 residues: Phospho-N-acetylmuramoyl-pentapeptide-transferase (321 aa).

Transmembrane regions (helical) follow at residues 1–21, 50–70, 76–96, 112–132, 140–160, 176–196, 200–220, 225–245, 250–270, and 300–320; these read MIFI…PILI, MGGL…IIFV, IILL…DDYI, FLAQ…FHLV, IPFV…IVFW, GLAT…SYML, AIGI…PYNL, VFMG…ISIM, LSLI…MLQV, and VVTV…WIGV.

Belongs to the glycosyltransferase 4 family. MraY subfamily. Mg(2+) is required as a cofactor.

The protein localises to the cell membrane. The catalysed reaction is UDP-N-acetyl-alpha-D-muramoyl-L-alanyl-gamma-D-glutamyl-L-lysyl-D-alanyl-D-alanine + di-trans,octa-cis-undecaprenyl phosphate = Mur2Ac(oyl-L-Ala-gamma-D-Glu-L-Lys-D-Ala-D-Ala)-di-trans,octa-cis-undecaprenyl diphosphate + UMP. Its pathway is cell wall biogenesis; peptidoglycan biosynthesis. In terms of biological role, catalyzes the initial step of the lipid cycle reactions in the biosynthesis of the cell wall peptidoglycan: transfers peptidoglycan precursor phospho-MurNAc-pentapeptide from UDP-MurNAc-pentapeptide onto the lipid carrier undecaprenyl phosphate, yielding undecaprenyl-pyrophosphoryl-MurNAc-pentapeptide, known as lipid I. The sequence is that of Phospho-N-acetylmuramoyl-pentapeptide-transferase from Staphylococcus epidermidis (strain ATCC 12228 / FDA PCI 1200).